A 64-amino-acid polypeptide reads, in one-letter code: Large ribosomal subunit protein uL30 (64 aa).

This sequence belongs to the universal ribosomal protein uL30 family. As to quaternary structure, part of the 50S ribosomal subunit.

This Rhodopseudomonas palustris (strain BisB18) protein is Large ribosomal subunit protein uL30.